Here is a 786-residue protein sequence, read N- to C-terminus: MLERTLRVLEYNKVKEQLLEHTASSLGRDKVKHLVPSTDFEEIVEMQDTTDEAAKVIRLKGSAPLGGITDIRSNVKRAKIGSMLSPNELLDIANTMYGSRNMKRFIEDMADNGVELPILETHVAQIVSLYDLEKKITNCIGDGGEVVDSASDKLRGIRTQIRTAESRIREKLENMTRSSNAQKMLSDSIVTIRNERYVIPVKQEYRGVYGGIVHDQSASGQTLFIEPQVIVELNNALQEARVKEKQEIERILLMLTEEVAVEADIVLSNVEVVANLDFIFAKAFYAKRIKATKPIVNNERYMDLRQARHPLIDPEIIVPNNIMLGKDFTTIVITGPNTGGKTVTLKTVGICVLMAQSGLHIPVMDESEICVFKNIFADIGDEQSIEQSLSTFSSHMVNIVDILEKADFESLVLFDELGAGTDPQEGAALAISILDEVCNRGARVVATTHYPELKAYGYNREQVINASVEFDVNTLSPTYKLLIGVPGRSNAFEISKRLGLSDRVIEQARNHISTDTNKIENMIAKLEESQKNAERDWNEAEALRKQSEKLHRELQRQIIEFNEDRDERLLKAQKEGEEKVEAAKKEAEGIIQELRQLRKAQLANVKDHELIEAKSRLEGAAPELVKKQKVNVKNTAPKQQLRAGDEVKVLTFGQKGQLLEKVSDTEWSVQIGILKMKVKESNMEYINTPKQTEKKAVATVKGRDYHVSLELDLRGERFENAMARVEKYLDDAQLASYPRVSIIHGKGTGALRQGVQDYLKKHRGVKTFRYGDMGEGGLGVTVVELK.

335–342 (GPNTGGKT) provides a ligand contact to ATP. The region spanning 711 to 786 (LDLRGERFEN…GLGVTVVELK (76 aa)) is the Smr domain.

The protein belongs to the DNA mismatch repair MutS family. MutS2 subfamily. Homodimer. Binds to stalled ribosomes, contacting rRNA.

Endonuclease that is involved in the suppression of homologous recombination and thus may have a key role in the control of bacterial genetic diversity. Functionally, acts as a ribosome collision sensor, splitting the ribosome into its 2 subunits. Detects stalled/collided 70S ribosomes which it binds and splits by an ATP-hydrolysis driven conformational change. Acts upstream of the ribosome quality control system (RQC), a ribosome-associated complex that mediates the extraction of incompletely synthesized nascent chains from stalled ribosomes and their subsequent degradation. Probably generates substrates for RQC. This Bacillus cereus (strain B4264) protein is Endonuclease MutS2.